The primary structure comprises 166 residues: PR-toxin biosynthesis cluster protein 10 (166 aa).

Functionally, part of the gene cluster that mediates the biosynthesis of PR-toxin, a bicyclic sesquiterpene belonging to the eremophilane class and acting as a mycotoxin. The first step of the pathway is catalyzed by the aristolochene synthase which performs the cyclization of trans,trans-farnesyl diphosphate (FPP) to the bicyclic sesquiterpene aristolochene. Following the formation of aristolochene, the non-oxygenated aristolochene is converted to the trioxygenated intermediate eremofortin B, via 7-epi-neopetasone. This conversion appears to involve three enzymes, a hydroxysterol oxidase-like enzyme, the quinone-oxidase prx3 that forms the quinone-type-structure in the bicyclic nucleus of aristolochene with the C8-oxo group and the C-3 hydroxyl group, and the P450 monooxygenase prx9 that introduces the epoxide at the double bond between carbons 1 and 2. No monoxy or dioxy-intermediates have been reported to be released to the broth, so these three early oxidative reactions may be coupled together. Eremofortin B is further oxidized by another P450 monooxygenase, that introduces a second epoxide between carbons 7 and 11 prior to acetylation to eremofortin A by the acetyltransferase prx11. The second epoxidation may be performed by a second P450 monooxygenase. After the acetylation step, eremofortin A is converted to eremofortin C and then to PR-toxin. First the conversion of eremofortin A to eremofortin C proceeds by oxidation of the side chain of the molecule at C-12 and is catalyzed by the short-chain oxidoreductase prx1. The cytochrome P450 monooxygenase prx8 also plays a role in this step. The primary alcohol formed at C-12 is finally oxidized by the short-chain alcohol dehydrogenase prx4 that forms PR-toxin. The protein is PR-toxin biosynthesis cluster protein 10 of Penicillium rubens (strain ATCC 28089 / DSM 1075 / NRRL 1951 / Wisconsin 54-1255) (Penicillium chrysogenum).